The chain runs to 177 residues: DELTA-stichotoxin-Hcr4b (177 aa).

The interval 3–12 (ALAGTITLGA) is plays an important role in the hemolytic activity. The interval 11-30 (GASLGFQILDKVLGELGKVS) is N-terminal region. Ser-54, Val-87, Ser-105, Pro-107, Tyr-133, Tyr-137, and Tyr-138 together coordinate phosphocholine. The segment at 105–120 (SVPFDYNLYSNWWDVK) is trp-rich region, which is important for the binding to lipid membrane.

Belongs to the actinoporin family. Sea anemone subfamily. In terms of assembly, octamer or nonamer in membranes. Monomer in the soluble state.

It is found in the secreted. The protein localises to the nematocyst. The protein resides in the target cell membrane. Functionally, pore-forming protein that forms cations-selective hydrophilic pores of around 1 nm and causes cardiac stimulation and cytolysis. Pore formation is a multi-step process that involves specific recognition of membrane sphingomyelin (but neither cholesterol nor phosphatidylcholine) using aromatic rich region and adjacent phosphocholine (POC) binding site, firm binding to the membrane (mainly driven by hydrophobic interactions) accompanied by the transfer of the N-terminal region to the lipid-water interface and finally pore formation after oligomerization of monomers. Cytolytic effects include red blood cells hemolysis, platelet aggregation and lysis, cytotoxic and cytostatic effects on fibroblasts. Lethality in mammals has been ascribed to severe vasospasm of coronary vessels, cardiac arrhythmia, and inotropic effects. Preincubation with exogenous sphingomyeline causes complete loss of hemolytic activity. This chain is DELTA-stichotoxin-Hcr4b, found in Radianthus crispa (Leathery sea anemone).